We begin with the raw amino-acid sequence, 291 residues long: D-alanine--D-alanine ligase (291 aa).

In terms of domain architecture, ATP-grasp spans 99 to 291; that stretch reads KRIVKSLGIN…FKKLISIIIT (193 aa). 125–179 contributes to the ATP binding site; sequence EWNKFPAVVKPVREGSSVGLKIVESLEELKEYALDLLKKTERVMVEEFVEGRDMT. Positions 245, 258, and 260 each coordinate Mg(2+).

It belongs to the D-alanine--D-alanine ligase family. Requires Mg(2+) as cofactor. It depends on Mn(2+) as a cofactor.

The protein localises to the cytoplasm. The enzyme catalyses 2 D-alanine + ATP = D-alanyl-D-alanine + ADP + phosphate + H(+). The protein operates within cell wall biogenesis; peptidoglycan biosynthesis. Its function is as follows. Cell wall formation. This chain is D-alanine--D-alanine ligase, found in Aquifex aeolicus (strain VF5).